The primary structure comprises 557 residues: Beta-amylase 2, chloroplastic (557 aa).

The transit peptide at 1-38 directs the protein to the chloroplast; the sequence is MMSLNLAHQTGAAAAVAPAAPRTAVVAAAAGTVSAPAV. Substrate contacts are provided by Asp-135, His-175, and Asp-183. Residue Glu-267 is the Proton donor of the active site. Substrate-binding residues include Lys-380, His-385, and Thr-427. The Proton acceptor role is filled by Glu-465. Substrate-binding positions include 466-467 and Arg-499; that span reads NA.

The protein belongs to the glycosyl hydrolase 14 family.

The protein resides in the plastid. The protein localises to the chloroplast. The catalysed reaction is Hydrolysis of (1-&gt;4)-alpha-D-glucosidic linkages in polysaccharides so as to remove successive maltose units from the non-reducing ends of the chains.. Functionally, possesses beta-amylase activity in vitro. May be involved in cold resistance by mediating the accumulation of maltose upon freezing stress, thus contributing to the protection of membranes. The sequence is that of Beta-amylase 2, chloroplastic from Oryza sativa subsp. japonica (Rice).